Here is a 114-residue protein sequence, read N- to C-terminus: FK506-binding protein 1 (114 aa).

Serine 2 is subject to N-acetylserine. The PPIase FKBP-type domain maps to 26-114; that stretch reads GDLVTIHYTG…VFDVELLKVN (89 aa). Serine 51 carries the post-translational modification Phosphoserine.

Belongs to the FKBP-type PPIase family. FKBP1 subfamily. Interacts with HOM3; the interaction is direct, plays a role in feedback inhibition of aspartokinase by threonine, and is inhibited by tacrolimus and sirolimus. Interacts with HMO1. Interacts with FAP1.

The protein resides in the cytoplasm. The protein localises to the mitochondrion. It carries out the reaction [protein]-peptidylproline (omega=180) = [protein]-peptidylproline (omega=0). Functionally, PPIases accelerate the folding of proteins. It catalyzes the cis-trans isomerization of proline imidic peptide bonds in oligopeptides. Plays a role in feedback inhibition of the pathway synthesizing the aspartate family of amino acids by binding to aspartokinase. The chain is FK506-binding protein 1 (FPR1) from Saccharomyces cerevisiae (strain ATCC 204508 / S288c) (Baker's yeast).